The following is a 280-amino-acid chain: Putative protein-tyrosine sulfotransferase (280 aa).

Position 16 to 20 (16 to 20 (RSGTT)) interacts with 3'-phosphoadenylyl sulfate. A disulfide bridge links C34 with C89. E37 (proton donor/acceptor) is an active-site residue. An N-linked (GlcNAc...) asparagine glycan is attached at N57. 3'-phosphoadenylyl sulfate contacts are provided by R116, S124, and R128. Residue N136 is glycosylated (N-linked (GlcNAc...) asparagine). C158 and C165 form a disulfide bridge. Residues Y170 and 215–224 (SASQVKNSIN) contribute to the 3'-phosphoadenylyl sulfate site.

Belongs to the protein sulfotransferase family.

It carries out the reaction L-tyrosyl-[protein] + 3'-phosphoadenylyl sulfate = O-sulfo-L-tyrosine-[protein] + adenosine 3',5'-bisphosphate + H(+). Catalyzes the O-sulfation of tyrosine residues within acidic motifs of polypeptides, using 3'-phosphoadenylyl sulfate (PAPS) as cosubstrate. The sequence is that of Putative protein-tyrosine sulfotransferase from Caenorhabditis briggsae.